The sequence spans 135 residues: HTH-type transcriptional activator AarP (135 aa).

The region spanning 22-120 (SEILVWIEGN…GISPSLYRLS (99 aa)) is the HTH araC/xylS-type domain. DNA-binding regions (H-T-H motif) lie at residues 39–60 (DDIAQHSGYTKWHLQRVFRKIV) and 87–110 (VIDIALKYQFDSQQSFAKRFKAYL).

In terms of biological role, transcriptional activator of 2'-N-acetyltransferase. The chain is HTH-type transcriptional activator AarP (aarP) from Providencia stuartii.